A 274-amino-acid chain; its full sequence is Diaminopimelate epimerase (274 aa).

Substrate contacts are provided by asparagine 11, glutamine 44, and asparagine 64. The active-site Proton donor is the cysteine 73. Residues 74–75 (GN), asparagine 157, asparagine 190, and 208–209 (ER) contribute to the substrate site. Cysteine 217 serves as the catalytic Proton acceptor. Substrate is bound at residue 218-219 (GS).

This sequence belongs to the diaminopimelate epimerase family. In terms of assembly, homodimer.

The protein localises to the cytoplasm. It catalyses the reaction (2S,6S)-2,6-diaminopimelate = meso-2,6-diaminopimelate. The protein operates within amino-acid biosynthesis; L-lysine biosynthesis via DAP pathway; DL-2,6-diaminopimelate from LL-2,6-diaminopimelate: step 1/1. Its function is as follows. Catalyzes the stereoinversion of LL-2,6-diaminopimelate (L,L-DAP) to meso-diaminopimelate (meso-DAP), a precursor of L-lysine and an essential component of the bacterial peptidoglycan. The sequence is that of Diaminopimelate epimerase from Haemophilus ducreyi (strain 35000HP / ATCC 700724).